The chain runs to 391 residues: Phosphatidate cytidylyltransferase 4, chloroplastic (391 aa).

Residues Met-1–Val-61 constitute a chloroplast transit peptide. Transmembrane regions (helical) follow at residues Ile-102–Phe-122, Phe-175–Val-195, Phe-202–Trp-222, Val-254–Phe-274, Ile-298–Pro-318, and Leu-321–Thr-341.

It belongs to the CDS family. Requires Mg(2+) as cofactor.

It localises to the plastid. The protein localises to the chloroplast membrane. It catalyses the reaction a 1,2-diacyl-sn-glycero-3-phosphate + CTP + H(+) = a CDP-1,2-diacyl-sn-glycerol + diphosphate. It participates in phospholipid metabolism; CDP-diacylglycerol biosynthesis; CDP-diacylglycerol from sn-glycerol 3-phosphate: step 3/3. Its activity is regulated as follows. Highest activities is obtained at about 30 mM CTP and 2 mM phosphatidic acid (PA). Functionally, may be involved in the synthesis of minor phospholipids and in modulation of IP3-mediated signal transduction. Promotes the biosynthesis of plastidial phosphatidylglycerol (PG) which is required for structure and function of thylakoid membranes and, hence, for photoautotrophic growth. This chain is Phosphatidate cytidylyltransferase 4, chloroplastic, found in Arabidopsis thaliana (Mouse-ear cress).